Reading from the N-terminus, the 565-residue chain is Sensor histidine kinase MtrB (565 aa).

The span at M1–W13 shows a compositional bias: basic residues. Residues M1–R21 are disordered. Transmembrane regions (helical) follow at residues V42–T62 and G213–V233. The HAMP domain maps to R235–T287. In terms of domain architecture, Histidine kinase spans D302–R519. H305 is modified (phosphohistidine; by autocatalysis). The tract at residues T524 to L565 is disordered. Over residues P538–Q549 the composition is skewed to low complexity. The segment covering H550–L565 has biased composition (basic and acidic residues).

The protein resides in the cell membrane. It carries out the reaction ATP + protein L-histidine = ADP + protein N-phospho-L-histidine.. Functionally, member of the two-component regulatory system MtrA/MtrB. Seems to function as a membrane-associated protein kinase that phosphorylates MtrA in response to environmental signals. In Mycolicibacterium paratuberculosis (strain ATCC BAA-968 / K-10) (Mycobacterium paratuberculosis), this protein is Sensor histidine kinase MtrB (mtrB).